A 209-amino-acid chain; its full sequence is Superoxide dismutase [Mn/Fe] (209 aa).

Fe(3+)-binding residues include His38, His90, Asp172, and His176. 4 residues coordinate Mn(2+): His38, His90, Asp172, and His176.

The protein belongs to the iron/manganese superoxide dismutase family. Mn(2+) serves as cofactor. It depends on Fe(3+) as a cofactor.

It carries out the reaction 2 superoxide + 2 H(+) = H2O2 + O2. In terms of biological role, destroys superoxide anion radicals which are normally produced within the cells and which are toxic to biological systems. Catalyzes the dismutation of superoxide anion radicals into O2 and H2O2 by successive reduction and oxidation of the transition metal ion at the active site. In Rickettsia conorii (strain ATCC VR-613 / Malish 7), this protein is Superoxide dismutase [Mn/Fe] (sodB).